The chain runs to 133 residues: S-protein homolog 9 (133 aa).

Positions 1 to 20 are cleaved as a signal peptide; sequence MNRLSCFLLVIGLCIGLSNA.

This sequence belongs to the plant self-incompatibility (S1) protein family.

It localises to the secreted. The polypeptide is S-protein homolog 9 (Arabidopsis thaliana (Mouse-ear cress)).